The primary structure comprises 151 residues: Probable cGMP 3',5'-cyclic phosphodiesterase subunit delta (151 aa).

This sequence belongs to the PDE6D/unc-119 family. Interacts with Pde6.

It is found in the nucleus. The protein resides in the cytoplasm. This is Probable cGMP 3',5'-cyclic phosphodiesterase subunit delta from Drosophila persimilis (Fruit fly).